Reading from the N-terminus, the 310-residue chain is Protoheme IX farnesyltransferase 2 (310 aa).

The next 9 helical transmembrane spans lie at 25–45 (PGII…AAKG), 49–69 (LVLM…GCAI), 98–118 (HVLL…ALFT), 121–141 (LALL…SLYM), 145–165 (SVYG…VGYC), 176–196 (VILL…IAIF), 222–242 (IVLY…AGYT), 245–265 (AFMA…LKGY), and 277–297 (QVFG…ALDF).

Belongs to the UbiA prenyltransferase family. Protoheme IX farnesyltransferase subfamily.

It localises to the cell inner membrane. The enzyme catalyses heme b + (2E,6E)-farnesyl diphosphate + H2O = Fe(II)-heme o + diphosphate. The protein operates within porphyrin-containing compound metabolism; heme O biosynthesis; heme O from protoheme: step 1/1. In terms of biological role, converts heme B (protoheme IX) to heme O by substitution of the vinyl group on carbon 2 of heme B porphyrin ring with a hydroxyethyl farnesyl side group. In Shewanella sp. (strain ANA-3), this protein is Protoheme IX farnesyltransferase 2.